A 555-amino-acid chain; its full sequence is 3-oxocholest-4-en-26-oate--CoA ligase (555 aa).

Residues 172-180, D418, R433, and K524 each bind ATP; that span reads TGGTTGHPK. The interval 525 to 555 is disordered; the sequence is PDYRWAKDQTGLRPADEVYNNGDGNGAAATG. The span at 544–555 shows a compositional bias: low complexity; the sequence is NNGDGNGAAATG.

This sequence belongs to the ATP-dependent AMP-binding enzyme family.

The catalysed reaction is (25S)-3-oxocholest-4-en-26-oate + ATP + CoA = (25S)-3-oxocholest-4-en-26-oyl-CoA + AMP + diphosphate. It functions in the pathway steroid metabolism; cholesterol metabolism. Functionally, involved in the degradation of the side chains of C-24 branched-chain sterols. Catalyzes the ATP-dependent CoA thioesterification of the sterol 3-oxocholest-4-en-26-oate to yield 3-oxocholest-4-en-26-oyl-CoA. It can also use beta-sitosterol, campesterol and 3beta-hydroxy-5-cholesten-26-oate. The sequence is that of 3-oxocholest-4-en-26-oate--CoA ligase from Rhodococcus rhodochrous.